An 82-amino-acid chain; its full sequence is Zinc finger CCCH domain-containing protein 13 (82 aa).

2 consecutive C3H1-type zinc fingers follow at residues 9-37 (RPGE…HPKN) and 55-82 (RPGQ…DHFT).

This is Zinc finger CCCH domain-containing protein 13 from Arabidopsis thaliana (Mouse-ear cress).